The chain runs to 738 residues: Exocyst complex component 3 (738 aa).

Residues 28-91 (LEKVEQYRHR…DEVERLLRGV (64 aa)) adopt a coiled-coil conformation.

The protein belongs to the SEC6 family. As to quaternary structure, the exocyst complex is composed of Sec3/Exoc1, Sec5/Exoc2, Sec6/Exoc3, Sec8/Exoc4, Sec10/Exoc5, Sec15/Exoc6, Exo70/Exoc7 and Exo84/Exoc8.

In terms of biological role, component of the exocyst complex involved in the docking of exocytic vesicles with fusion sites on the plasma membrane. In Drosophila melanogaster (Fruit fly), this protein is Exocyst complex component 3.